Consider the following 833-residue polypeptide: Leucine--tRNA ligase (833 aa).

The 'HIGH' region motif lies at 41 to 52 (PYPSGAGLHVGH). Residues 610-614 (KMSKS) carry the 'KMSKS' region motif. An ATP-binding site is contributed by K613.

It belongs to the class-I aminoacyl-tRNA synthetase family.

The protein localises to the cytoplasm. It catalyses the reaction tRNA(Leu) + L-leucine + ATP = L-leucyl-tRNA(Leu) + AMP + diphosphate. The polypeptide is Leucine--tRNA ligase (Streptococcus pneumoniae (strain 70585)).